A 352-amino-acid polypeptide reads, in one-letter code: MPYSADLDIRVTDSSLRDGSHAKRHQFTVEHVRSIVGALDAAGVPVIEVTHGDGLGGSSFNYGFSHTPEQELIKAAVETAEQAKIAFLMLPGLGVRSDIREAADNGASICRIATHCTEADISVQHFGLARDLGLETVGFLMMSHSQPPEVLAKQARIMADAGCQCVYVVDSAGALILNAVSDRVSALVAELGDDAQVGFHGHENLGLGVANSVLAVEAGALQIDGSTRRFGAGAGNTPVEAFAAVTEKLGIRTGIDTLKIIDAAEDVVRPIMDGDCLLDRLSLTMGYAGVYSSFLKHADSHASRYGVSGAEILIEAGRRKLVGGQEDQLIEIALGLADRKSAETAVAEKKSA.

Positions 9-261 constitute a Pyruvate carboxyltransferase domain; the sequence is IRVTDSSLRD…RTGIDTLKII (253 aa). 17 to 18 lines the substrate pocket; that stretch reads RD. Asp-18 provides a ligand contact to Mn(2+). Catalysis depends on His-21, which acts as the Proton acceptor. Positions 171 and 200 each coordinate substrate. Residues His-200 and His-202 each contribute to the Mn(2+) site. Tyr-291 contacts substrate.

The protein belongs to the 4-hydroxy-2-oxovalerate aldolase family.

The catalysed reaction is (S)-4-hydroxy-2-oxopentanoate = acetaldehyde + pyruvate. This Rhodococcus opacus (strain B4) protein is 4-hydroxy-2-oxovalerate aldolase 5.